Consider the following 24-residue polypeptide: AFANTGVEIVSIDTYLFSLYDEDK.

It belongs to the glycosyl hydrolase 17 family. Post-translationally, the N-terminus is blocked.

This is Major pollen allergen Ole e 4 from Olea europaea (Common olive).